Here is a 276-residue protein sequence, read N- to C-terminus: Putative pyruvate, phosphate dikinase regulatory protein (276 aa).

151-158 is a binding site for ADP; that stretch reads GISRTSKT.

Belongs to the pyruvate, phosphate/water dikinase regulatory protein family. PDRP subfamily.

It catalyses the reaction N(tele)-phospho-L-histidyl/L-threonyl-[pyruvate, phosphate dikinase] + ADP = N(tele)-phospho-L-histidyl/O-phospho-L-threonyl-[pyruvate, phosphate dikinase] + AMP + H(+). The catalysed reaction is N(tele)-phospho-L-histidyl/O-phospho-L-threonyl-[pyruvate, phosphate dikinase] + phosphate + H(+) = N(tele)-phospho-L-histidyl/L-threonyl-[pyruvate, phosphate dikinase] + diphosphate. In terms of biological role, bifunctional serine/threonine kinase and phosphorylase involved in the regulation of the pyruvate, phosphate dikinase (PPDK) by catalyzing its phosphorylation/dephosphorylation. The polypeptide is Putative pyruvate, phosphate dikinase regulatory protein (Streptococcus agalactiae serotype Ia (strain ATCC 27591 / A909 / CDC SS700)).